The chain runs to 498 residues: NADH-quinone oxidoreductase subunit N 2 (498 aa).

14 helical membrane passes run 19-39, 47-67, 83-103, 114-134, 136-156, 171-191, 215-235, 249-269, 282-302, 317-337, 345-365, 389-409, 420-440, and 468-488; these read VATQLSIIFGWASVLLVIALF, IVGYLAMVGAMVAAAVGIPLW, YSLTLNWLFLAAAAITMVLSL, SEYYVLVLFATGGMMLLAQGA, LIILFLGLELLSIVLYVLTGF, LLIGAFAGGFVVFGIALLYGA, IYLLAGAALVVVGFGYKVAMA, PTPIAGLLSVGSKAAGFAALL, IWAPVLAVLAIATLAVGNIGA, IGHAGYILFGVIAAGAPGGIA, VLLYLIAYTFTNLGAFGVLIA, LAVAMAVCMLSLAGVPPTGGF, WLSGMGWITVIGVIVAAIAAF, and AGLALATLGVLILGFLPTPAI.

Belongs to the complex I subunit 2 family. As to quaternary structure, NDH-1 is composed of 14 different subunits. Subunits NuoA, H, J, K, L, M, N constitute the membrane sector of the complex.

The protein resides in the cell membrane. The catalysed reaction is a quinone + NADH + 5 H(+)(in) = a quinol + NAD(+) + 4 H(+)(out). In terms of biological role, NDH-1 shuttles electrons from NADH, via FMN and iron-sulfur (Fe-S) centers, to quinones in the respiratory chain. The immediate electron acceptor for the enzyme in this species is believed to be ubiquinone. Couples the redox reaction to proton translocation (for every two electrons transferred, four hydrogen ions are translocated across the cytoplasmic membrane), and thus conserves the redox energy in a proton gradient. In Roseiflexus castenholzii (strain DSM 13941 / HLO8), this protein is NADH-quinone oxidoreductase subunit N 2.